A 117-amino-acid polypeptide reads, in one-letter code: MSGEVSYYAGQTAEEAVARIYDRSGRPVAARRWRGVSGEIDLIAREGAEVIFIEVKKSKSHAAAAARLSRRQMDRIYGAASEFLAGEPRGQLTASRFDVALVDALGRVEIIENAFAA.

Belongs to the UPF0102 family.

This is UPF0102 protein Rsph17029_0461 from Cereibacter sphaeroides (strain ATCC 17029 / ATH 2.4.9) (Rhodobacter sphaeroides).